The sequence spans 756 residues: Polyribonucleotide nucleotidyltransferase (756 aa).

Mg(2+) contacts are provided by D527 and D533. Residues 593–652 (PRITTIKVPVDKIGEVIGPKGKMINSITEETGASISIEDDGTVFVGASNGEAAQAAIDKI) enclose the KH domain. The 70-residue stretch at 664 to 733 (GERFLGTVVK…NRGKISLVLV (70 aa)) folds into the S1 motif domain.

The protein belongs to the polyribonucleotide nucleotidyltransferase family. Mg(2+) serves as cofactor.

Its subcellular location is the cytoplasm. The enzyme catalyses RNA(n+1) + phosphate = RNA(n) + a ribonucleoside 5'-diphosphate. Involved in mRNA degradation. Catalyzes the phosphorolysis of single-stranded polyribonucleotides processively in the 3'- to 5'-direction. The polypeptide is Polyribonucleotide nucleotidyltransferase (Mycolicibacterium gilvum (strain PYR-GCK) (Mycobacterium gilvum (strain PYR-GCK))).